Reading from the N-terminus, the 334-residue chain is Glyceraldehyde-3-phosphate dehydrogenase (334 aa).

NAD(+)-binding positions include 12-13 and Gly-111; that span reads TI. 140–142 contributes to the D-glyceraldehyde 3-phosphate binding site; sequence SCN. The active-site Nucleophile is the Cys-141. Arg-167 contacts NAD(+). Position 192-193 (192-193) interacts with D-glyceraldehyde 3-phosphate; sequence HG. NAD(+) is bound at residue Gln-298.

It belongs to the glyceraldehyde-3-phosphate dehydrogenase family. Homotetramer.

It is found in the cytoplasm. It catalyses the reaction D-glyceraldehyde 3-phosphate + phosphate + NADP(+) = (2R)-3-phospho-glyceroyl phosphate + NADPH + H(+). The enzyme catalyses D-glyceraldehyde 3-phosphate + phosphate + NAD(+) = (2R)-3-phospho-glyceroyl phosphate + NADH + H(+). It functions in the pathway carbohydrate degradation; glycolysis; pyruvate from D-glyceraldehyde 3-phosphate: step 1/5. This chain is Glyceraldehyde-3-phosphate dehydrogenase (gap), found in Pyrococcus abyssi (strain GE5 / Orsay).